Here is a 168-residue protein sequence, read N- to C-terminus: Disulfide bond formation protein B 2 (168 aa).

At 1 to 14 (MSAPIGATRAERWT) the chain is on the cytoplasmic side. A helical transmembrane segment spans residues 15-31 (LLAIGVASFELVAGALW). At 32-49 (IQLAWQEDPCPLCIIQRY) the chain is on the periplasmic side. The cysteines at positions 41 and 44 are disulfide-linked. Residues 50–64 (LFLLIALFTFVAAAG) form a helical membrane-spanning segment. Residues 65–69 (GRRVA) are Cytoplasmic-facing. The chain crosses the membrane as a helical span at residues 70–87 (LLRVLSLTTALAGAAVAV). Residues 88 to 142 (RHIYVQAHPGFSCGFDALQPVIDSLPPAHWLPPVFKVGGLCETLYPPILGLSLPM) are Periplasmic-facing. A disulfide bridge links cysteine 100 with cysteine 128. A helical membrane pass occupies residues 143-161 (WALVGFSAIAVALGWRIRA). Residues 162 to 168 (QAVIRTA) lie on the Cytoplasmic side of the membrane.

It belongs to the DsbB family.

It localises to the cell inner membrane. Functionally, required for disulfide bond formation in some periplasmic proteins. Acts by oxidizing the DsbA protein. This Burkholderia lata (strain ATCC 17760 / DSM 23089 / LMG 22485 / NCIMB 9086 / R18194 / 383) protein is Disulfide bond formation protein B 2.